A 481-amino-acid chain; its full sequence is Ribosomal RNA small subunit methyltransferase F (481 aa).

Residues 119–125 (ASAPGSK), Glu-143, Asp-170, and Asp-188 each bind S-adenosyl-L-methionine. The active-site Nucleophile is Cys-241.

Belongs to the class I-like SAM-binding methyltransferase superfamily. RsmB/NOP family.

It localises to the cytoplasm. The enzyme catalyses cytidine(1407) in 16S rRNA + S-adenosyl-L-methionine = 5-methylcytidine(1407) in 16S rRNA + S-adenosyl-L-homocysteine + H(+). Specifically methylates the cytosine at position 1407 (m5C1407) of 16S rRNA. The sequence is that of Ribosomal RNA small subunit methyltransferase F from Shewanella sp. (strain MR-4).